Consider the following 254-residue polypeptide: Flagellar L-ring protein 1 (254 aa).

Residues 1-26 form the signal peptide; it reads MSPFSSAFRPRRIAISALLLAIGALA.

The protein belongs to the FlgH family. The basal body constitutes a major portion of the flagellar organelle and consists of four rings (L,P,S, and M) mounted on a central rod.

It is found in the cell outer membrane. Its subcellular location is the bacterial flagellum basal body. In terms of biological role, assembles around the rod to form the L-ring and probably protects the motor/basal body from shearing forces during rotation. The polypeptide is Flagellar L-ring protein 1 (flgH1) (Bradyrhizobium diazoefficiens (strain JCM 10833 / BCRC 13528 / IAM 13628 / NBRC 14792 / USDA 110)).